The chain runs to 1940 residues: Myosin-3 (1940 aa).

The 50-residue stretch at 33–82 (DAKTYCFVVDSKEEYAKGKIKSSQDGKVTVETEDNRTLVVKPEDVYAMNP) folds into the Myosin N-terminal SH3-like domain. The 694-residue stretch at 86 to 779 (DKIEDMAMLT…LLGTLEEMRD (694 aa)) folds into the Myosin motor domain. Lysine 130 carries the post-translational modification N6,N6,N6-trimethyllysine. 179 to 186 (GESGAGKT) provides a ligand contact to ATP. Actin-binding stretches follow at residues 656-678 (LNKL…IPNE) and 758-772 (KFGH…GLLG). The 30-residue stretch at 782–811 (LAKLITRTQAVCRGFLMRVEFQKMMQRRES) folds into the IQ domain. Positions 840-1933 (LLKSAETEKE…KTRDFTSSRM (1094 aa)) form a coiled coil. Residues 1260–1289 (ARGKNEETQRSLSELTTQKSRLQTEAGELS) form a disordered region. The segment covering 1269–1282 (RSLSELTTQKSRLQ) has biased composition (polar residues).

This sequence belongs to the TRAFAC class myosin-kinesin ATPase superfamily. Myosin family. As to quaternary structure, muscle myosin is a hexameric protein that consists of 2 heavy chain subunits (MHC), 2 alkali light chain subunits (MLC) and 2 regulatory light chain subunits (MLC-2).

It localises to the cytoplasm. It is found in the myofibril. Muscle contraction. The protein is Myosin-3 (Myh3) of Rattus norvegicus (Rat).